A 417-amino-acid chain; its full sequence is Adrenocortical dysplasia protein homolog (417 aa).

The short motif at 11–13 (PWI) is the PWI element. At Ser25 the chain carries Phosphoserine. An interaction with POT1 region spans residues 156-245 (ESASSSAGLT…SSIDSSQKAQ (90 aa)). Composition is skewed to polar residues over residues 237 to 250 (SIDSSQKAQENPAS) and 259 to 292 (SGASVSLLSALPTSDPGQKDNSQPPPTVCSTSPR). Positions 237 to 309 (SIDSSQKAQE…PCSSTPSSPL (73 aa)) are disordered. The span at 296 to 309 (PSSTPCSSTPSSPL) shows a compositional bias: low complexity. Phosphoserine occurs at positions 313 and 317. Lys348 participates in a covalent cross-link: Glycyl lysine isopeptide (Lys-Gly) (interchain with G-Cter in SUMO2).

Component of the shelterin complex (telosome) composed of TERF1, TERF2, TINF2, TERF2IP ACD and POT1. Forms heterodimers with POT1. Identified in a complex with POT1 and single-stranded telomeric DNA. Interacts with STN1 and TINF2.

The protein localises to the nucleus. It is found in the chromosome. Its subcellular location is the telomere. Its function is as follows. Component of the shelterin complex (telosome) that is involved in the regulation of telomere length and protection. Shelterin associates with arrays of double-stranded TTAGGG repeats added by telomerase and protects chromosome ends. Without its protective activity, telomeres are no longer hidden from the DNA damage surveillance and chromosome ends are inappropriately processed by DNA repair pathways. Promotes binding of POT1 to single-stranded telomeric DNA. Modulates the inhibitory effects of POT1 on telomere elongation. The ACD-POT1 heterodimer enhances telomere elongation by recruiting telomerase to telomeres and increasing its processivity. May play a role in organogenesis. The chain is Adrenocortical dysplasia protein homolog from Rattus norvegicus (Rat).